We begin with the raw amino-acid sequence, 528 residues long: MSKVAIIDFGSQFTQLLARRIRDLNIYSEIFLPNVAFDLIKGVDAFILSGGPRSVPNSDGIPKIVHDILQFNEKTSIPVLGICYGLQILSNYFESDVVSNCNKEFGKTILNIIKNSKIIENIWESGDQAYVWMSHADSVYNIPRGFEVIAYSVLNNSIAMVANEQRRIYGMQFHPEVYHTPDGINLLANFLDIAGCQKDWTVTSFIDDQQDAIKKQIGNKKVIAALSGGVDSSVAAALTYKAIGDQLHCVFIDNGLLRYNEVEKVKQLFINELKIPVTIVDKSAVFLNRLKSITDPERKRKIIGETFIEIFEEEANKLEGVEFLMQGTIYPDVVESGGSGSIAKESVVIKSHHNVGGLPKTMKFKLVEPLKYLFKDEVRILGRNLGISTEILMRHPFPGPGLAVRIIGEITEEKVKMLQAADDIYINLIKKYELYDVMWQAFVVLLPVKTVGVMGDRRTYGHACVLRAVNSHDGMTAESFPFCMDEETQWKFFKCIQEASNAIINSVNGINRVAYDITSKPPATIEWE.

The Glutamine amidotransferase type-1 domain occupies 3–199 (KVAIIDFGSQ…FLDIAGCQKD (197 aa)). The active-site Nucleophile is Cys-83. Active-site residues include His-174 and Glu-176. The GMPS ATP-PPase domain maps to 200-394 (WTVTSFIDDQ…LGISTEILMR (195 aa)). 227 to 233 (SGGVDSS) is an ATP binding site.

Homodimer.

It carries out the reaction XMP + L-glutamine + ATP + H2O = GMP + L-glutamate + AMP + diphosphate + 2 H(+). Its pathway is purine metabolism; GMP biosynthesis; GMP from XMP (L-Gln route): step 1/1. In terms of biological role, catalyzes the synthesis of GMP from XMP. The protein is GMP synthase [glutamine-hydrolyzing] of Ehrlichia ruminantium (strain Gardel).